The following is a 150-amino-acid chain: 3-hydroxyacyl-[acyl-carrier-protein] dehydratase FabZ (150 aa).

The active site involves H51.

Belongs to the thioester dehydratase family. FabZ subfamily.

It localises to the cytoplasm. The catalysed reaction is a (3R)-hydroxyacyl-[ACP] = a (2E)-enoyl-[ACP] + H2O. Functionally, involved in unsaturated fatty acids biosynthesis. Catalyzes the dehydration of short chain beta-hydroxyacyl-ACPs and long chain saturated and unsaturated beta-hydroxyacyl-ACPs. In Legionella pneumophila subsp. pneumophila (strain Philadelphia 1 / ATCC 33152 / DSM 7513), this protein is 3-hydroxyacyl-[acyl-carrier-protein] dehydratase FabZ.